A 459-amino-acid polypeptide reads, in one-letter code: Ribulose bisphosphate carboxylase large chain (459 aa).

At Lys-4 the chain carries N6,N6,N6-trimethyllysine. Asn-113 and Thr-163 together coordinate substrate. The active-site Proton acceptor is the Lys-165. Lys-167 is a substrate binding site. Mg(2+) is bound by residues Lys-191, Asp-193, and Glu-194. Lys-191 carries the post-translational modification N6-carboxylysine. The active-site Proton acceptor is His-284. The substrate site is built by Arg-285, His-317, and Ser-369.

It belongs to the RuBisCO large chain family. Type I subfamily. Heterohexadecamer of 8 large chains and 8 small chains; disulfide-linked. The disulfide link is formed within the large subunit homodimers. Mg(2+) serves as cofactor. Post-translationally, the disulfide bond which can form in the large chain dimeric partners within the hexadecamer appears to be associated with oxidative stress and protein turnover.

The protein resides in the plastid. It is found in the chloroplast. The enzyme catalyses 2 (2R)-3-phosphoglycerate + 2 H(+) = D-ribulose 1,5-bisphosphate + CO2 + H2O. It catalyses the reaction D-ribulose 1,5-bisphosphate + O2 = 2-phosphoglycolate + (2R)-3-phosphoglycerate + 2 H(+). RuBisCO catalyzes two reactions: the carboxylation of D-ribulose 1,5-bisphosphate, the primary event in carbon dioxide fixation, as well as the oxidative fragmentation of the pentose substrate in the photorespiration process. Both reactions occur simultaneously and in competition at the same active site. The chain is Ribulose bisphosphate carboxylase large chain from Ceratopetalum gummiferum (New South Wales Christmas bush).